Here is a 183-residue protein sequence, read N- to C-terminus: ATP-dependent protease subunit HslV (183 aa).

Residue Thr2 is part of the active site. Positions 157, 160, and 163 each coordinate Na(+).

This sequence belongs to the peptidase T1B family. HslV subfamily. A double ring-shaped homohexamer of HslV is capped on each side by a ring-shaped HslU homohexamer. The assembly of the HslU/HslV complex is dependent on binding of ATP.

Its subcellular location is the cytoplasm. The catalysed reaction is ATP-dependent cleavage of peptide bonds with broad specificity.. With respect to regulation, allosterically activated by HslU binding. Functionally, protease subunit of a proteasome-like degradation complex believed to be a general protein degrading machinery. This chain is ATP-dependent protease subunit HslV, found in Marinomonas sp. (strain MWYL1).